The following is a 187-amino-acid chain: UPF0301 protein YE3428 (187 aa).

Belongs to the UPF0301 (AlgH) family.

The chain is UPF0301 protein YE3428 from Yersinia enterocolitica serotype O:8 / biotype 1B (strain NCTC 13174 / 8081).